The following is a 444-amino-acid chain: Tol-Pal system protein TolB (444 aa).

The first 19 residues, 1–19 (MRNIIYFILSLLFSFKGYA), serve as a signal peptide directing secretion.

This sequence belongs to the TolB family. As to quaternary structure, the Tol-Pal system is composed of five core proteins: the inner membrane proteins TolA, TolQ and TolR, the periplasmic protein TolB and the outer membrane protein Pal. They form a network linking the inner and outer membranes and the peptidoglycan layer.

It localises to the periplasm. Functionally, part of the Tol-Pal system, which plays a role in outer membrane invagination during cell division and is important for maintaining outer membrane integrity. The polypeptide is Tol-Pal system protein TolB (Rickettsia felis (strain ATCC VR-1525 / URRWXCal2) (Rickettsia azadi)).